The following is a 175-amino-acid chain: NADH-ubiquinone oxidoreductase chain 6 (175 aa).

The next 5 membrane-spanning stretches (helical) occupy residues 1-21, 26-46, 47-67, 87-107, and 152-172; these read MMYM…GFSS, IYGG…VMGL, GGSF…LVVF, VILS…VWMI, and WLVI…IEIT.

This sequence belongs to the complex I subunit 6 family.

It localises to the mitochondrion membrane. The catalysed reaction is a ubiquinone + NADH + 5 H(+)(in) = a ubiquinol + NAD(+) + 4 H(+)(out). Core subunit of the mitochondrial membrane respiratory chain NADH dehydrogenase (Complex I) that is believed to belong to the minimal assembly required for catalysis. Complex I functions in the transfer of electrons from NADH to the respiratory chain. The immediate electron acceptor for the enzyme is believed to be ubiquinone. This Dasypus novemcinctus (Nine-banded armadillo) protein is NADH-ubiquinone oxidoreductase chain 6 (MT-ND6).